Consider the following 429-residue polypeptide: Endoglucanase A (429 aa).

Residues 1–34 (MVSKKQKFLTVILVIVLAIVIVGGVFGISFVKGR) form the signal peptide. Over residues 46–94 (AKTEQVKEPAKEEPKLVIKEKKQDESAKKEQELKKAKEEAEAAVEKETE) the composition is skewed to basic and acidic residues. A disordered region spans residues 46–100 (AKTEQVKEPAKEEPKLVIKEKKQDESAKKEQELKKAKEEAEAAVEKETEKTEEEP). The active-site Proton donor is Glu249. The active-site Nucleophile is the Glu334.

This sequence belongs to the glycosyl hydrolase 5 (cellulase A) family.

It catalyses the reaction Endohydrolysis of (1-&gt;4)-beta-D-glucosidic linkages in cellulose, lichenin and cereal beta-D-glucans.. The sequence is that of Endoglucanase A (celA) from Butyrivibrio fibrisolvens.